Consider the following 277-residue polypeptide: Ribosomal protein L11 methyltransferase (277 aa).

S-adenosyl-L-methionine-binding residues include Thr130, Gly151, Asp172, and Asn213.

It belongs to the methyltransferase superfamily. PrmA family.

Its subcellular location is the cytoplasm. It catalyses the reaction L-lysyl-[protein] + 3 S-adenosyl-L-methionine = N(6),N(6),N(6)-trimethyl-L-lysyl-[protein] + 3 S-adenosyl-L-homocysteine + 3 H(+). In terms of biological role, methylates ribosomal protein L11. The protein is Ribosomal protein L11 methyltransferase of Campylobacter concisus (strain 13826).